The primary structure comprises 255 residues: Homeobox protein DLX-1 (255 aa).

The segment covering 1 to 14 (MTMTTMPESLNSPV) has biased composition (polar residues). 2 disordered regions span residues 1–38 (MTMTTMPESLNSPVSGKAVFMEFGPPNQQMSPSPMSHG) and 95–118 (SLAQSRLEDPGADSEKSTVVEGGE). A compositionally biased stretch (low complexity) spans 25-36 (PPNQQMSPSPMS). Basic and acidic residues predominate over residues 100 to 112 (RLEDPGADSEKST). A DNA-binding region (homeobox) is located at residues 128 to 187 (IRKPRTIYSSLQLQALNRRFQQTQYLALPERAELAASLGLTQTQVKIWFQNKRSKFKKLM). The disordered stretch occupies residues 204-230 (ALSAGSPPVPPGWNPNSSSGKGSGGNA).

The protein belongs to the distal-less homeobox family. As to quaternary structure, interacts with SMAD4 (via homeobox DNA-binding domain). Interacts (via homeobox DNA-binding domain) with POU4F2; this interaction suppresses DLX1-mediated transcriptional activity in postnatal retina and enhances retinal ganglion cell (RGC) differentiation. As to expression, expressed in hematopoietic cell lines.

It localises to the nucleus. Functionally, plays a role as a transcriptional activator or repressor. Inhibits several cytokine signaling pathways, such as TGFB1, activin-A/INHBA and BMP4 by interfering with the transcriptional stimulatory activity of transcription factors, such as MSX2, FAST2, SMAD2 and SMAD3 during hematopoietic cell differentiation. Plays a role in terminal differentiation of interneurons, such as amacrine and bipolar cells in the developing retina. Likely to play a regulatory role in the development of the ventral forebrain. May play a role in craniofacial patterning and morphogenesis and may be involved in the early development of diencephalic subdivisions. The chain is Homeobox protein DLX-1 (DLX1) from Homo sapiens (Human).